The sequence spans 785 residues: Phenylalanine--tRNA ligase beta subunit (785 aa).

Positions phenylalanine 39–alanine 147 constitute a tRNA-binding domain. The B5 domain maps to lysine 399–leucine 474. 4 residues coordinate Mg(2+): aspartate 452, aspartate 458, glutamate 461, and glutamate 462. Positions serine 688–arginine 780 constitute an FDX-ACB domain.

Belongs to the phenylalanyl-tRNA synthetase beta subunit family. Type 1 subfamily. Tetramer of two alpha and two beta subunits. Mg(2+) is required as a cofactor.

The protein localises to the cytoplasm. The catalysed reaction is tRNA(Phe) + L-phenylalanine + ATP = L-phenylalanyl-tRNA(Phe) + AMP + diphosphate + H(+). The sequence is that of Phenylalanine--tRNA ligase beta subunit from Thermus thermophilus (strain ATCC BAA-163 / DSM 7039 / HB27).